The chain runs to 181 residues: Adenylate kinase 2 (181 aa).

An ATP-binding site is contributed by 10 to 15; the sequence is GSGKST. Residues 30-59 form an NMP region; that stretch reads SMGGILREAIANATPLGIKAKPYVERGDLL. AMP-binding positions include Arg36, 57 to 59, 85 to 88, and Gln92; these read DLL and GYPR. The LID stretch occupies residues 126–132; that stretch reads NRSLFDD. Arg127 provides a ligand contact to ATP. Arg140 contributes to the AMP binding site. Residue Pro168 coordinates ATP.

The protein belongs to the adenylate kinase family. Monomer.

The protein localises to the cytoplasm. It carries out the reaction AMP + ATP = 2 ADP. Its pathway is purine metabolism; AMP biosynthesis via salvage pathway; AMP from ADP: step 1/1. Its function is as follows. Catalyzes the reversible transfer of the terminal phosphate group between ATP and AMP. Plays an important role in cellular energy homeostasis and in adenine nucleotide metabolism. This Synechocystis sp. (strain ATCC 27184 / PCC 6803 / Kazusa) protein is Adenylate kinase 2.